The primary structure comprises 141 residues: MGRSMVLISAVVLAFLVAAPIPEVTAKKYLVGDKKFWNPNINYTLWAQGKHFYVGDWLYFVFYRDQHNILEVNKADYEKCISNRPIRNYTRGAGRDIVPLYETRRYYLLDGRGGCVQGMKLDVLVETPPPPPPFTPPPPAQ.

The N-terminal stretch at 1–26 is a signal peptide; the sequence is MGRSMVLISAVVLAFLVAAPIPEVTA. The Phytocyanin domain maps to 27-127; the sequence is KKYLVGDKKF…GMKLDVLVET (101 aa). Asparagine 42 and asparagine 88 each carry an N-linked (GlcNAc...) asparagine glycan. Cysteines 80 and 115 form a disulfide.

This sequence belongs to the early nodulin-like (ENODL) family.

Its function is as follows. May act as a carbohydrate transporter. The sequence is that of Early nodulin-like protein 19 from Arabidopsis thaliana (Mouse-ear cress).